Consider the following 615-residue polypeptide: Homologous recombination OB-fold protein (615 aa).

Disordered regions lie at residues 42-75 (LRPVSSRPQETVQTQSSRPVPSYPTSNQSVPRLC), 213-326 (PWPS…PVTQ), and 546-590 (DFLE…FPEE). Ser47 carries the phosphoserine modification. 3 stretches are compositionally biased toward polar residues: residues 47 to 71 (SRPQETVQTQSSRPVPSYPTSNQSV), 232 to 241 (SCVSTSQQRG), and 257 to 275 (IRSSPQNYGPGQPLQSPRA). Over residues 302 to 317 (SSRAPVSSVESPVSTP) the composition is skewed to low complexity.

Interacts with MCM8; this interaction is necessary for MCM8-MCM9 helicase complex recruitment to DNA damage sites. Interacts with RPA1; this interaction associates HROB with the RPA complex.

It localises to the nucleus. Its subcellular location is the chromosome. Functionally, DNA-binding protein involved in homologous recombination that acts by recruiting the MCM8-MCM9 helicase complex to sites of DNA damage to promote DNA repair synthesis. This chain is Homologous recombination OB-fold protein, found in Mus musculus (Mouse).